Here is a 79-residue protein sequence, read N- to C-terminus: UPF0180 protein BCB4264_A1446 (79 aa).

It belongs to the UPF0180 family.

This is UPF0180 protein BCB4264_A1446 from Bacillus cereus (strain B4264).